Reading from the N-terminus, the 60-residue chain is Large ribosomal subunit protein uL30 (60 aa).

This sequence belongs to the universal ribosomal protein uL30 family. Part of the 50S ribosomal subunit.

The chain is Large ribosomal subunit protein uL30 from Streptococcus equi subsp. equi (strain 4047).